A 372-amino-acid polypeptide reads, in one-letter code: BTB/POZ and TAZ domain-containing protein 4 (372 aa).

The interval 14–37 (SADSSSVPIPPPLPSKSDGLKKKL) is disordered. The region spanning 60 to 128 (ADVVIYTDNG…LYSSCYEKEE (69 aa)) is the BTB domain. Residues 238–330 (RIYSQLYEAM…SDQCRVPLCR (93 aa)) form a TAZ-type zinc finger. Residues 341-364 (KKDESRWKLLVKNVLGSKKIGGSP) form a caM-binding region.

In terms of assembly, interacts with GTE11/BET10 through the BTB domain. In terms of tissue distribution, preferentially expressed in leaves, stems and flowers.

Its subcellular location is the cytoplasm. It participates in protein modification; protein ubiquitination. In terms of biological role, may act as a substrate-specific adapter of an E3 ubiquitin-protein ligase complex (CUL3-RBX1-BTB) which mediates the ubiquitination and subsequent proteasomal degradation of target proteins. In Arabidopsis thaliana (Mouse-ear cress), this protein is BTB/POZ and TAZ domain-containing protein 4 (BT4).